Consider the following 498-residue polypeptide: MMRKSQLQFNTELRVHHPPALFRSNKIICTIGPSSQSVEVLKDLMKAGLNVARMNFSHGTYEYHQKTIDNVRKAASELGIHVGIALDTKGPEIRTGLFPAGDVVIEAHKTVILTTDETFKEKGTAEKFYVDYMNITKVVPVGGHIFVDDGLLDLIVVKISGKDIECVAQNTHTISNRKGINLPNADVDLPAVSEKDLMDLQFGAKNRVDFVFASFIRNADQVNEVRQAFGGKIAVIAKIENYQGIDNIDAIIDAADGIMVARGDLGVEIPAEKVVIAQKMIMSKCNKVGKTVICATQMLDSMTHGPRPTRAEVSDVAKSVLDGADCVMLSGETAKGKYPVETVVYMSRICCETQVTMWNMAAFEAIKNLQSFPLIPEEAICSSAVNSIFELHAKAILVLTNTGRSAHMVSKYRPPVPIICASQELDVCRLLSITRGTIPVYYDTEKLGPDYDREKRVGLAIDVGKQMGVFKEGDVVVAVHADHHTKGFANQIRAIYIK.

Residue Arg53 coordinates substrate. Residues Asn55, Ser57, Asp87, and Thr88 each contribute to the K(+) site. 55-58 is an ATP binding site; sequence NFSH. 2 residues coordinate ATP: Arg94 and Lys178. Position 240 (Glu240) interacts with Mg(2+). The substrate site is built by Gly263, Asp264, and Thr296. Asp264 serves as a coordination point for Mg(2+).

Belongs to the pyruvate kinase family. In terms of assembly, homotetramer. Requires Mg(2+) as cofactor. K(+) is required as a cofactor.

It catalyses the reaction pyruvate + ATP = phosphoenolpyruvate + ADP + H(+). It functions in the pathway carbohydrate degradation; glycolysis; pyruvate from D-glyceraldehyde 3-phosphate: step 5/5. This Trypanoplasma borreli protein is Pyruvate kinase (PYK).